The sequence spans 151 residues: Deoxyuridine 5'-triphosphate nucleotidohydrolase (151 aa).

Substrate contacts are provided by residues 70–72 (RSG), asparagine 83, 87–89 (LID), and methionine 97.

The protein belongs to the dUTPase family. Mg(2+) serves as cofactor.

The catalysed reaction is dUTP + H2O = dUMP + diphosphate + H(+). The protein operates within pyrimidine metabolism; dUMP biosynthesis; dUMP from dCTP (dUTP route): step 2/2. In terms of biological role, this enzyme is involved in nucleotide metabolism: it produces dUMP, the immediate precursor of thymidine nucleotides and it decreases the intracellular concentration of dUTP so that uracil cannot be incorporated into DNA. In Pseudomonas aeruginosa (strain LESB58), this protein is Deoxyuridine 5'-triphosphate nucleotidohydrolase.